The chain runs to 520 residues: MAGPVLTLGLLAALVVCALPGSWGLNEEQRLIQHLFNEKGYDKDLRPVARKEDKVDVALSLTLSNLISLKEVEETLTTNVWIDHAWVDSRLQWDANDFGNITVLRLPPDMVWLPEIVLENNNDGSFQISYACNVLVYDSGYVTWLPPAIFRSSCPISVTYFPFDWQNCSLKFSSLKYTAKEITLSLKQEEENNRSYPIEWIIIDPEGFTENGEWEIVHRAAKLNVDPSVPMDSTNHQDVTFYLIIRRKPLFYIINILVPCVLISFMINLVFYLPGDCGEKTSVAISVLLAQSVFLLLISKRLPATSMAIPLVGKFLLFGMVLVTMVVVICVIVLNIHFRTPSTHVLSEGVKKFFLETLPKLLHMSRPAEEDPGPRALIRRSSSLGYICKAEEYFSLKSRSDLMFEKQSERHGLARRLTTARRPPASSEQVQQELFNEMKPAVDGANFIVNHMRDQNSYNEEKDNWNQVARTVDRLCLFVVTPVMVVGTAWIFLQGVYNQPPLQPFPGDPFSYSEQDKRFI.

The signal sequence occupies residues 1–24 (MAGPVLTLGLLAALVVCALPGSWG). At 25 to 248 (LNEEQRLIQH…VTFYLIIRRK (224 aa)) the chain is on the extracellular side. Asn-100, Asn-167, and Asn-193 each carry an N-linked (GlcNAc...) asparagine glycan. Cys-154 and Cys-168 are joined by a disulfide. Helical transmembrane passes span 249–273 (PLFYIINILVPCVLISFMINLVFYL), 281–299 (TSVAISVLLAQSVFLLLIS), and 315–336 (FLLFGMVLVTMVVVICVIVLNI). Topologically, residues 337-474 (HFRTPSTHVL…WNQVARTVDR (138 aa)) are cytoplasmic. Phosphotyrosine; by Tyr-kinases is present on Tyr-393. A helical membrane pass occupies residues 475-493 (LCLFVVTPVMVVGTAWIFL).

Belongs to the ligand-gated ion channel (TC 1.A.9) family. Acetylcholine receptor (TC 1.A.9.1) subfamily. Delta/CHRND sub-subfamily. Pentamer of two alpha chains, and one each of the beta, delta, and gamma (in immature muscle) or epsilon (in mature muscle) chains. The muscle heteropentamer composed of alpha-1, beta-1, delta, epsilon subunits interacts with the alpha-conotoxin ImII.

The protein localises to the postsynaptic cell membrane. It is found in the cell membrane. It carries out the reaction K(+)(in) = K(+)(out). It catalyses the reaction Na(+)(in) = Na(+)(out). Functionally, after binding acetylcholine, the AChR responds by an extensive change in conformation that affects all subunits and leads to opening of an ion-conducting channel across the plasma membrane. This Mus musculus (Mouse) protein is Acetylcholine receptor subunit delta (Chrnd).